A 120-amino-acid polypeptide reads, in one-letter code: NAD(P)H-quinone oxidoreductase subunit 3, chloroplastic (120 aa).

Transmembrane regions (helical) follow at residues 7–27 (YETFWIFLLISSLMPILAFLI), 64–84 (MFALVFVVFDVETVFLYPWAM), and 88–108 (ILGISTFIEASIFVLILIVGS).

Belongs to the complex I subunit 3 family. In terms of assembly, NDH is composed of at least 16 different subunits, 5 of which are encoded in the nucleus.

It is found in the plastid. It localises to the chloroplast thylakoid membrane. The enzyme catalyses a plastoquinone + NADH + (n+1) H(+)(in) = a plastoquinol + NAD(+) + n H(+)(out). The catalysed reaction is a plastoquinone + NADPH + (n+1) H(+)(in) = a plastoquinol + NADP(+) + n H(+)(out). NDH shuttles electrons from NAD(P)H:plastoquinone, via FMN and iron-sulfur (Fe-S) centers, to quinones in the photosynthetic chain and possibly in a chloroplast respiratory chain. The immediate electron acceptor for the enzyme in this species is believed to be plastoquinone. Couples the redox reaction to proton translocation, and thus conserves the redox energy in a proton gradient. This chain is NAD(P)H-quinone oxidoreductase subunit 3, chloroplastic, found in Cycas taitungensis (Prince sago).